The chain runs to 198 residues: Putative nitroreductase MJ1384 (198 aa).

This sequence belongs to the nitroreductase family. The cofactor is FMN.

The protein is Putative nitroreductase MJ1384 of Methanocaldococcus jannaschii (strain ATCC 43067 / DSM 2661 / JAL-1 / JCM 10045 / NBRC 100440) (Methanococcus jannaschii).